The primary structure comprises 528 residues: Phenylalanine--tRNA ligase alpha subunit (528 aa).

Residues Thr-365 and Phe-444 each contribute to the L-phenylalanine site. Residue Glu-446 participates in Mg(2+) binding. Phe-469 provides a ligand contact to L-phenylalanine.

The protein belongs to the class-II aminoacyl-tRNA synthetase family. Phe-tRNA synthetase alpha subunit type 2 subfamily. Tetramer of two alpha and two beta subunits. Mg(2+) serves as cofactor.

It is found in the cytoplasm. The catalysed reaction is tRNA(Phe) + L-phenylalanine + ATP = L-phenylalanyl-tRNA(Phe) + AMP + diphosphate + H(+). The chain is Phenylalanine--tRNA ligase alpha subunit from Borreliella burgdorferi (strain ATCC 35210 / DSM 4680 / CIP 102532 / B31) (Borrelia burgdorferi).